We begin with the raw amino-acid sequence, 496 residues long: Glycerol kinase (496 aa).

T12 serves as a coordination point for ADP. Positions 12, 13, and 14 each coordinate ATP. Position 12 (T12) interacts with sn-glycerol 3-phosphate. R16 is a binding site for ADP. Sn-glycerol 3-phosphate-binding residues include R82, E83, and Y134. Glycerol is bound by residues R82, E83, and Y134. At H230 the chain carries Phosphohistidine; by HPr. D244 lines the sn-glycerol 3-phosphate pocket. D244 and Q245 together coordinate glycerol. ADP-binding residues include T266 and G309. The ATP site is built by T266, G309, Q313, and G410. Residues G410 and N414 each contribute to the ADP site.

Belongs to the FGGY kinase family. Homotetramer and homodimer (in equilibrium). In terms of processing, the phosphoenolpyruvate-dependent sugar phosphotransferase system (PTS), including enzyme I, and histidine-containing protein (HPr) are required for the phosphorylation, which leads to the activation of the enzyme.

The enzyme catalyses glycerol + ATP = sn-glycerol 3-phosphate + ADP + H(+). The protein operates within polyol metabolism; glycerol degradation via glycerol kinase pathway; sn-glycerol 3-phosphate from glycerol: step 1/1. Its activity is regulated as follows. Activated by phosphorylation and inhibited by fructose 1,6-bisphosphate (FBP). Key enzyme in the regulation of glycerol uptake and metabolism. Catalyzes the phosphorylation of glycerol to yield sn-glycerol 3-phosphate. The chain is Glycerol kinase from Bacillus anthracis (strain A0248).